Reading from the N-terminus, the 887-residue chain is Microsomal triglyceride transfer protein large subunit (887 aa).

The first 11 residues, 1–11 (FLCFISSYSAS), serve as a signal peptide directing secretion. In terms of domain architecture, Vitellogenin spans 21 to 655 (LNNDRLYKLT…YIEKTPLHGI (635 aa)). Cys167 and Cys187 are disulfide-bonded.

Heterodimer; heterodimerizes with the protein disulfide isomerase (P4HB/PDI). Interacts with APOB. Interacts with PRAP1.

The protein localises to the endoplasmic reticulum. Its subcellular location is the golgi apparatus. It carries out the reaction a 1,2-diacyl-sn-glycero-3-phosphocholine(in) = a 1,2-diacyl-sn-glycero-3-phosphocholine(out). It catalyses the reaction a 1,2-diacyl-sn-glycero-3-phosphoethanolamine(in) = a 1,2-diacyl-sn-glycero-3-phosphoethanolamine(out). The enzyme catalyses a cholesterol ester(in) = a cholesterol ester(out). The catalysed reaction is a triacyl-sn-glycerol(in) = a triacyl-sn-glycerol(out). Its function is as follows. Catalyzes the transport of triglyceride, cholesteryl ester, and phospholipid between phospholipid surfaces. Required for the assembly and secretion of plasma lipoproteins that contain apolipoprotein B. May be involved in regulating cholesteryl ester biosynthesis in cells that produce lipoproteins. This chain is Microsomal triglyceride transfer protein large subunit (MTTP), found in Bos taurus (Bovine).